A 271-amino-acid polypeptide reads, in one-letter code: Solute carrier family 66 member 2 (271 aa).

3 consecutive transmembrane segments (helical) span residues 8-28 (WLLVPLHQLVSWGAAAAMVFG), 49-69 (FSTYVCLVLLVANILRILFWF), and 76-96 (PLLWQSAIMILTMLLMLKLCT). Residues 14-80 (HQLVSWGAAA…RRFESPLLWQ (67 aa)) form the PQ-loop 1 domain. The residue at position 110 (Ser-110) is a Phosphoserine. The next 3 membrane-spanning stretches (helical) occupy residues 145–165 (DYVQCVLAFTGVAGYITYLSI), 168–188 (ALFVETLGFLAVLTEAMLGVP), and 232–252 (VCGLLQVLVDLAILGQAYAFA). A PQ-loop 2 domain is found at 178 to 233 (AVLTEAMLGVPQLYRNHRHQSTEGMSIKMVLMWTSGDAFKTAYFLLKGAPLQFSVC).

It is found in the membrane. This is Solute carrier family 66 member 2 from Homo sapiens (Human).